The primary structure comprises 164 residues: ATP synthase subunit b (164 aa).

A helical membrane pass occupies residues 12 to 32 (FILVTGSVIVLLLLIKAFAWG).

The protein belongs to the ATPase B chain family. F-type ATPases have 2 components, F(1) - the catalytic core - and F(0) - the membrane proton channel. F(1) has five subunits: alpha(3), beta(3), gamma(1), delta(1), epsilon(1). F(0) has three main subunits: a(1), b(2) and c(10-14). The alpha and beta chains form an alternating ring which encloses part of the gamma chain. F(1) is attached to F(0) by a central stalk formed by the gamma and epsilon chains, while a peripheral stalk is formed by the delta and b chains.

It localises to the cell membrane. Functionally, f(1)F(0) ATP synthase produces ATP from ADP in the presence of a proton or sodium gradient. F-type ATPases consist of two structural domains, F(1) containing the extramembraneous catalytic core and F(0) containing the membrane proton channel, linked together by a central stalk and a peripheral stalk. During catalysis, ATP synthesis in the catalytic domain of F(1) is coupled via a rotary mechanism of the central stalk subunits to proton translocation. In terms of biological role, component of the F(0) channel, it forms part of the peripheral stalk, linking F(1) to F(0). The chain is ATP synthase subunit b from Streptococcus equi subsp. zooepidemicus (strain MGCS10565).